A 329-amino-acid polypeptide reads, in one-letter code: DNA-directed RNA polymerase subunit alpha (329 aa).

The segment at 1–235 (MVREKVKVST…DLFIPFLHTE (235 aa)) is alpha N-terminal domain (alpha-NTD). Residues 269 to 329 (IALKYIFIDQ…KQILGILEKK (61 aa)) form an alpha C-terminal domain (alpha-CTD) region.

The protein belongs to the RNA polymerase alpha chain family. In terms of assembly, in plastids the minimal PEP RNA polymerase catalytic core is composed of four subunits: alpha, beta, beta', and beta''. When a (nuclear-encoded) sigma factor is associated with the core the holoenzyme is formed, which can initiate transcription.

It is found in the plastid. The protein localises to the chloroplast. The enzyme catalyses RNA(n) + a ribonucleoside 5'-triphosphate = RNA(n+1) + diphosphate. In terms of biological role, DNA-dependent RNA polymerase catalyzes the transcription of DNA into RNA using the four ribonucleoside triphosphates as substrates. The sequence is that of DNA-directed RNA polymerase subunit alpha from Gossypium hirsutum (Upland cotton).